The primary structure comprises 208 residues: Ribosome maturation factor RimM (208 aa).

A PRC barrel domain is found at 98–205 (ADEFYVPDLI…IIEITPPDGL (108 aa)). The disordered stretch occupies residues 154-174 (LPSKSKRSRDTKNQKKNQSPP).

This sequence belongs to the RimM family. As to quaternary structure, binds ribosomal protein uS19.

The protein localises to the cytoplasm. Its function is as follows. An accessory protein needed during the final step in the assembly of 30S ribosomal subunit, possibly for assembly of the head region. Essential for efficient processing of 16S rRNA. May be needed both before and after RbfA during the maturation of 16S rRNA. It has affinity for free ribosomal 30S subunits but not for 70S ribosomes. The sequence is that of Ribosome maturation factor RimM from Trichodesmium erythraeum (strain IMS101).